The primary structure comprises 182 residues: MLQALLIFVLQIIYVPILTIRTILLVKNQTRSAAAVGLLEGAIYIVSLGIVFQDLSNWMNIVAYVIGFSAGLLLGGYIENKLAIGYITYQVSLLDRCNELVDELRHSGFGVTVFEGEGINSIRYRLDIVAKRSREKELLEIINEIAPKAFMSSYEIRSFKGGYLTKAMKKRALMKKKDHHVS.

3 helical membrane passes run 6–26 (LIFV…ILLV), 32–52 (SAAA…GIVF), and 58–78 (WMNI…GGYI).

The protein belongs to the UPF0316 family.

It is found in the cell membrane. This Bacillus cereus (strain AH820) protein is UPF0316 protein BCAH820_3389.